The chain runs to 140 residues: Gas vesicle protein O (140 aa).

Basic and acidic residues predominate over residues 1-14 (MSDQGNEHANHDGI). Residues 1 to 61 (MSDQGNEHAN…DSTIGLSDAQ (61 aa)) are disordered. Polar residues predominate over residues 39 to 56 (QTASDEAVSNQSPDSTIG).

The protein belongs to the gas vesicle GvpO family. In terms of assembly, forms homodimers, forms a GvpN-GvpO heterodimer, interacts with GvpC, GvpF, GvpI and GvpL, might interact with GvpA.

Its subcellular location is the gas vesicle. It is found in the cytoplasm. In terms of biological role, a minor component of the gas vesicle (GV), may play a role in transcription and/or RNA stability and/or in GV assembly. Gas vesicles are small, hollow, gas filled protein structures found in some microorganisms. They allow positioning of halobacteria at the optimal depth for growth in the poorly aerated shallow brine pools of their habitat. Its function is as follows. Expression of a 9.5 kb mc-vac DNA fragment containing 2 divergently transcribed regions (gvpD-gvpE-gvpF-gvpG-gvpH-gvpI-gvpJ-gvpK-gvpL-gvpM and gvpA-gvpC-gvpN-gvpO) allows H.volcanii to produce gas vesicles. The chain is Gas vesicle protein O from Haloferax mediterranei (strain ATCC 33500 / DSM 1411 / JCM 8866 / NBRC 14739 / NCIMB 2177 / R-4) (Halobacterium mediterranei).